The primary structure comprises 84 residues: MKVTLIAILTCAAVLVLHTTAAEELEESQLMEVGMPDTELAAVDEERLFECSVSCEIEKEGNKDCKKKKCKGGWKCKFNMCVKV.

The first 22 residues, 1-22 (MKVTLIAILTCAAVLVLHTTAA), serve as a signal peptide directing secretion. The propeptide occupies 23-47 (EELEESQLMEVGMPDTELAAVDEER). Intrachain disulfides connect C51–C65, C55–C76, and C70–C81.

The protein belongs to the neurotoxin 12 (Hwtx-2) family. 02 (Hwtx-2) subfamily. In terms of tissue distribution, expressed by the venom gland.

The protein resides in the secreted. Its function is as follows. Postsynaptic neurotoxin. The protein is U4-theraphotoxin-Hhn1a of Cyriopagopus hainanus (Chinese bird spider).